The chain runs to 447 residues: Argininosuccinate synthase (447 aa).

ATP contacts are provided by residues 17–25 (AFSGGLDTS) and Ala-43. Tyr-99 contributes to the L-citrulline binding site. Residues Gly-129 and Thr-131 each coordinate ATP. L-aspartate contacts are provided by Thr-131, Asn-135, and Asp-136. Asn-135 is a binding site for L-citrulline. Asp-136 contributes to the ATP binding site. Arg-139 and Ser-192 together coordinate L-citrulline. ATP is bound at residue Asp-194. The L-citrulline site is built by Thr-201, Glu-203, and Glu-280.

It belongs to the argininosuccinate synthase family. Type 2 subfamily. In terms of assembly, homotetramer.

It is found in the cytoplasm. It carries out the reaction L-citrulline + L-aspartate + ATP = 2-(N(omega)-L-arginino)succinate + AMP + diphosphate + H(+). It functions in the pathway amino-acid biosynthesis; L-arginine biosynthesis; L-arginine from L-ornithine and carbamoyl phosphate: step 2/3. This is Argininosuccinate synthase from Klebsiella pneumoniae subsp. pneumoniae (strain ATCC 700721 / MGH 78578).